The chain runs to 363 residues: Putative dipeptidase YkvY (363 aa).

5 residues coordinate Mn(2+): D222, D233, H297, E326, and E340.

It belongs to the peptidase M24B family. The cofactor is Mn(2+).

The sequence is that of Putative dipeptidase YkvY (ykvY) from Bacillus subtilis (strain 168).